The chain runs to 318 residues: Probable pyridoxal 5'-phosphate synthase subunit PDX1.1 (318 aa).

Aspartate 49 provides a ligand contact to D-ribose 5-phosphate. The active-site Schiff-base intermediate with D-ribose 5-phosphate is the lysine 106. Glycine 178 is a D-ribose 5-phosphate binding site. Arginine 190 contributes to the D-glyceraldehyde 3-phosphate binding site. D-ribose 5-phosphate is bound by residues glycine 239 and 260–261; that span reads GS.

Belongs to the PdxS/SNZ family.

The enzyme catalyses aldehydo-D-ribose 5-phosphate + D-glyceraldehyde 3-phosphate + L-glutamine = pyridoxal 5'-phosphate + L-glutamate + phosphate + 3 H2O + H(+). It participates in cofactor biosynthesis; pyridoxal 5'-phosphate biosynthesis. Functionally, catalyzes the formation of pyridoxal 5'-phosphate from ribose 5-phosphate (RBP), glyceraldehyde 3-phosphate (G3P) and ammonia. The ammonia is provided by PDX2. Can also use ribulose 5-phosphate and dihydroxyacetone phosphate as substrates, resulting from enzyme-catalyzed isomerization of RBP and G3P, respectively. Also plays an indirect role in resistance to singlet oxygen-generating photosensitizers. The protein is Probable pyridoxal 5'-phosphate synthase subunit PDX1.1 (PDX11) of Oryza sativa subsp. japonica (Rice).